A 575-amino-acid polypeptide reads, in one-letter code: 4-substituted benzoates-glutamate ligase GH3.12 (575 aa).

Residues 6-33 are a coiled coil; the sequence is DINETFEKQLKDLTSNVKSIQDNLLEEI. An AMP-binding site is contributed by 95-96; it reads SS. Residue 120-123 coordinates salicylate; that stretch reads YDLR. Residues threonine 301, threonine 324, serine 328, tyrosine 347, aspartate 398, and arginine 417 each coordinate AMP.

Belongs to the IAA-amido conjugating enzyme family. Interacts with the P.syringae pv. maculicola effector HopW1-1 (via C-terminus). In terms of tissue distribution, expressed in seedlings, mostly in cotyledons, leaves, hypocotyls and sporadically in roots. Not detected in unchallenged adult plants, except in flowers.

Specifically and reversibly inhibited by salicylic acid (SA). In terms of biological role, catalyzes the conjugation of specific amino acids (e.g. Glu and possibly His, Lys, and Met) to their preferred acyl substrates (e.g. 4-substituted benzoates), in a magnesium ion- and ATP-dependent manner. Can use 4-substituted benzoates such as 4-aminobenzoate (pABA), 4-fluorobenzoate and 4-hydroxybenzoate (4-HBA), and, to a lesser extent, benzoate, vanillate and trans-cinnamate, but not 2-substituted benzoates and salicylic acid (SA), as conjugating acyl substrates. Involved in both basal and induced resistance in a SA-dependent manner. Confers resistance to virulent and avirulent pathogens (at least bacteria and oomycetes), and promotes SA glucosides accumulation. Required for the establishment of hyper-sensitive response (HR) upon incompatible interaction and subsequent systemic acquired resistance (SAR). The protein is 4-substituted benzoates-glutamate ligase GH3.12 (GH3.12) of Arabidopsis thaliana (Mouse-ear cress).